The chain runs to 396 residues: MAKSKFERVKPHINVGTIGHVDHGKTTLTAAITTILTRKFGGEAKSYAQIDSAPEERARGITINTSHVEYETDKRHYAHVDCPGHADYVKNMITGAAQMDGAILVVSAADGPMPQTREHILLARQVGVPYIIVFMNKADMVDDAELLELVEMEIRELLSKYDFPGDDTPIIIGSALKALEGDKGDIGEAAILKLAEVLDSYIPEPQRAIDGAFIMPVEDVFSISGRGTVVTGRVERGIVKVGDEIEIVGLRPTIKTTCTGVEMFRKLLDQGQAGDNVGILLRGTKREEVERGQVLAKPGSILPHTKFSAEIYVLSKEEGGRHTPFFAGYRPQFYFRTTDVTGSIELPAGVEMVMPGDNISVNVNLIAPIAMSEGLRFAIREGGRTVGAGVVAKVIE.

Positions lysine 10–glutamine 206 constitute a tr-type G domain. Positions glycine 19–threonine 26 are G1. Glycine 19 to threonine 26 provides a ligand contact to GTP. Threonine 26 contributes to the Mg(2+) binding site. Residues glycine 60–asparagine 64 form a G2 region. Positions aspartate 81 to glycine 84 are G3. Residues aspartate 81–histidine 85 and asparagine 136–aspartate 139 each bind GTP. The interval asparagine 136–aspartate 139 is G4. Positions serine 174–leucine 176 are G5.

It belongs to the TRAFAC class translation factor GTPase superfamily. Classic translation factor GTPase family. EF-Tu/EF-1A subfamily. In terms of assembly, monomer.

The protein localises to the cytoplasm. The catalysed reaction is GTP + H2O = GDP + phosphate + H(+). Its function is as follows. GTP hydrolase that promotes the GTP-dependent binding of aminoacyl-tRNA to the A-site of ribosomes during protein biosynthesis. This is Elongation factor Tu 1 from Nitrosomonas eutropha (strain DSM 101675 / C91 / Nm57).